A 143-amino-acid chain; its full sequence is Transmembrane protein 80 (143 aa).

4 helical membrane-spanning segments follow: residues 21 to 41 (MLFY…LLMI), 55 to 75 (LVLD…RLYL), 99 to 119 (ALLS…DWAL), and 121 to 141 (ATLL…IAAF).

Its subcellular location is the membrane. It localises to the cell projection. The protein localises to the cilium. The sequence is that of Transmembrane protein 80 from Homo sapiens (Human).